A 76-amino-acid chain; its full sequence is Defensin-like protein 122 (76 aa).

Residues 1–25 (MSKTTVIAIFMVVLVLGLVTKETQG) form the signal peptide. 4 cysteine pairs are disulfide-bonded: cysteine 29–cysteine 74, cysteine 39–cysteine 60, cysteine 44–cysteine 68, and cysteine 48–cysteine 70.

Belongs to the DEFL family. Expressed in flower buds, but not in stems, roots or rosette leaves.

The protein resides in the secreted. In Arabidopsis thaliana (Mouse-ear cress), this protein is Defensin-like protein 122 (LCR30).